We begin with the raw amino-acid sequence, 1072 residues long: DNA-directed RNA polymerase subunit beta (1072 aa).

This sequence belongs to the RNA polymerase beta chain family. In terms of assembly, in plastids the minimal PEP RNA polymerase catalytic core is composed of four subunits: alpha, beta, beta', and beta''. When a (nuclear-encoded) sigma factor is associated with the core the holoenzyme is formed, which can initiate transcription.

Its subcellular location is the plastid. It localises to the chloroplast. The catalysed reaction is RNA(n) + a ribonucleoside 5'-triphosphate = RNA(n+1) + diphosphate. DNA-dependent RNA polymerase catalyzes the transcription of DNA into RNA using the four ribonucleoside triphosphates as substrates. The protein is DNA-directed RNA polymerase subunit beta of Arabidopsis thaliana (Mouse-ear cress).